Reading from the N-terminus, the 304-residue chain is CBY1-interacting BAR domain-containing protein 2 (304 aa).

Positions 6 to 217 are BAR-like; it reads SRDSQVRVME…EKYDLERDLL (212 aa).

The protein belongs to the CIBAR family. Homodimer (via BAR-like domain). Heterodimer (via BAR-like domain) with FAM92A. Interacts with CBY1. In terms of tissue distribution, restricted to certain tissues, most prominently expressed in multicilaited tissues.

The protein localises to the cytoplasm. The protein resides in the cytoskeleton. It localises to the microtubule organizing center. It is found in the centrosome. Its subcellular location is the centriole. The protein localises to the cilium basal body. Its function is as follows. May play a role in ciliogenesis. In cooperation with CBY1 may facilitate ciliogenesis likely by the recruitment and fusion of endosomal vesicles at distal appendages during early stages of ciliogenesis. The sequence is that of CBY1-interacting BAR domain-containing protein 2 from Homo sapiens (Human).